The sequence spans 534 residues: Peptide chain release factor 3 (534 aa).

One can recognise a tr-type G domain in the interval 9–278 (ARRRTFAIIS…FFVEHAPSPQ (270 aa)). GTP is bound by residues 18 to 25 (SHPDAGKT), 86 to 90 (DTPGH), and 140 to 143 (NKLD).

It belongs to the TRAFAC class translation factor GTPase superfamily. Classic translation factor GTPase family. PrfC subfamily.

It localises to the cytoplasm. Its function is as follows. Increases the formation of ribosomal termination complexes and stimulates activities of RF-1 and RF-2. It binds guanine nucleotides and has strong preference for UGA stop codons. It may interact directly with the ribosome. The stimulation of RF-1 and RF-2 is significantly reduced by GTP and GDP, but not by GMP. This is Peptide chain release factor 3 from Xylella fastidiosa (strain M12).